Reading from the N-terminus, the 519-residue chain is Cytochrome P450 monooxygenase AtmP (519 aa).

Residues 21-41 (SMLLVVTLVILFLWFIIPSPV) traverse the membrane as a helical segment. Heme is bound at residue cysteine 457.

It belongs to the cytochrome P450 family. The cofactor is heme.

It is found in the membrane. It participates in secondary metabolite biosynthesis. Cytochrome P450 monooxygenase; part of the ATM2 gene cluster that mediates the biosynthesis of aflatrem, a tremorgenic mycotoxin with acute neurotoxic effects. Synthesis of geranylgeranyl diphosphate (GGPP) by AtmG (a GGPP synthase) precedes condensation of GGPP with indole 3-glycerol phosphate, followed by epoxidation and cyclization by AtmM (a FAD-dependent monooxygenase) and AtmC (a prenyltransferase) to produce paspaline. AtmB is also essential for paspaline production, but its exact role has not been identified yet. AtmP, a cytochrome P450 monooxygenase, subsequently converts paspaline to 13-desoxypaxilline via PC-M6 by removal of the C-30 methyl group and oxidation at C-10. AtmQ, a cytochrome P450 monooxygenase, then catalyzes the oxidation of 13-desoxypaxilline, first at C-7 to produce paspalicine and then at C-13 to form paspalinine. Finally, AtmD prenylates paspalinine to form aflatrem. This is Cytochrome P450 monooxygenase AtmP from Aspergillus flavus.